The chain runs to 213 residues: ER lumen protein-retaining receptor erd-2.1 (213 aa).

Residues Met-1 to Asn-2 lie on the Lumenal side of the membrane. Residues Leu-3–Leu-21 traverse the membrane as a helical segment. Over Lys-22 to Arg-35 the chain is Cytoplasmic. The chain crosses the membrane as a helical span at residues Ser-36 to Thr-53. At Asn-54–Thr-61 the chain is on the lumenal side. Residues Ala-62–Ala-80 form a helical membrane-spanning segment. Residues Lys-81–Glu-96 are Cytoplasmic-facing. A helical membrane pass occupies residues Phe-97–Asn-110. Residues His-111–Glu-117 are Lumenal-facing. A helical membrane pass occupies residues Val-118–Met-137. The Cytoplasmic portion of the chain corresponds to Leu-138–Ala-149. Residues His-150–Tyr-168 traverse the membrane as a helical segment. The Lumenal segment spans residues Arg-169–Pro-178. A helical membrane pass occupies residues Ile-179 to Ile-199. Topologically, residues Thr-200–Ala-213 are cytoplasmic.

Belongs to the ERD2 family.

It is found in the endoplasmic reticulum membrane. Functionally, required for the retention of luminal endoplasmic reticulum proteins. Determines the specificity of the luminal ER protein retention system. Also required for normal vesicular traffic through the Golgi. The sequence is that of ER lumen protein-retaining receptor erd-2.1 from Caenorhabditis elegans.